The chain runs to 333 residues: Thiamine-monophosphate kinase (333 aa).

Residues aspartate 35, threonine 50, and aspartate 51 each coordinate Mg(2+). Histidine 58 lines the substrate pocket. Aspartate 80 provides a ligand contact to Mg(2+). Residues tyrosine 111, 128 to 129, and arginine 153 each bind ATP; that span reads GD. Aspartate 129 contacts Mg(2+). Residue aspartate 230 coordinates Mg(2+). Serine 232 serves as a coordination point for ATP. Aspartate 233 provides a ligand contact to Mg(2+). Substrate contacts are provided by glutamate 278 and phenylalanine 330.

It belongs to the thiamine-monophosphate kinase family.

The catalysed reaction is thiamine phosphate + ATP = thiamine diphosphate + ADP. The protein operates within cofactor biosynthesis; thiamine diphosphate biosynthesis; thiamine diphosphate from thiamine phosphate: step 1/1. In terms of biological role, catalyzes the ATP-dependent phosphorylation of thiamine-monophosphate (TMP) to form thiamine-pyrophosphate (TPP), the active form of vitamin B1. The chain is Thiamine-monophosphate kinase from Prochlorococcus marinus (strain SARG / CCMP1375 / SS120).